Reading from the N-terminus, the 149-residue chain is UPF0179 protein Hlac_2319 (149 aa).

It belongs to the UPF0179 family.

This Halorubrum lacusprofundi (strain ATCC 49239 / DSM 5036 / JCM 8891 / ACAM 34) protein is UPF0179 protein Hlac_2319.